The chain runs to 541 residues: uncharacterized protein (541 aa).

5 helical membrane-spanning segments follow: residues 10–32 (LNNQ…KINI), 39–57 (SSAI…YTLP), 62–84 (TLGL…FFSL), 91–113 (LSLG…TYLF), and 146–168 (APAA…IQII). 2 RCK C-terminal domains span residues 183–260 (LNKE…DDLE) and 268–352 (TPVD…IFGN). 6 consecutive transmembrane segments (helical) span residues 357–375 (SYNF…GFIL), 385–407 (SGIF…SNIY), 428–447 (GLVL…ILAT), 452–474 (GLQL…VFIC), 481–500 (PFLS…PGLA), and 515–537 (YATV…IFIV).

This sequence belongs to the AAE transporter (TC 2.A.81) family.

It is found in the cell membrane. This is an uncharacterized protein from Desulfotalea psychrophila (strain LSv54 / DSM 12343).